Here is a 431-residue protein sequence, read N- to C-terminus: ATP-dependent protease ATPase subunit HslU (431 aa).

Residues Val-18, 60–65, Asp-244, Glu-309, and Arg-381 each bind ATP; that span reads GVGKTE.

The protein belongs to the ClpX chaperone family. HslU subfamily. In terms of assembly, a double ring-shaped homohexamer of HslV is capped on each side by a ring-shaped HslU homohexamer. The assembly of the HslU/HslV complex is dependent on binding of ATP.

It localises to the cytoplasm. Its function is as follows. ATPase subunit of a proteasome-like degradation complex; this subunit has chaperone activity. The binding of ATP and its subsequent hydrolysis by HslU are essential for unfolding of protein substrates subsequently hydrolyzed by HslV. HslU recognizes the N-terminal part of its protein substrates and unfolds these before they are guided to HslV for hydrolysis. This is ATP-dependent protease ATPase subunit HslU from Caulobacter sp. (strain K31).